A 1077-amino-acid chain; its full sequence is Hemoglobin and hemoglobin-haptoglobin-binding protein A (1077 aa).

The first 24 residues, 1–24 (MTNFRLNVLAYSVMLGLTASVAYA), serve as a signal peptide directing secretion. The interval 25-72 (EPTNQPTNQPTNQPTNQPTNQPTNQPTNQPTNQPTNQPTNQPTNQNSN) is disordered. Tandem repeats lie at residues 26–29 (PTNQ), 30–33 (PTNQ), 34–37 (PTNQ), 38–41 (PTNQ), 42–45 (PTNQ), 46–49 (PTNQ), 50–53 (PTNQ), 54–57 (PTNQ), 58–61 (PTNQ), 62–65 (PTNQ), and 66–69 (PTNQ). Residues 26–69 (PTNQPTNQPTNQPTNQPTNQPTNQPTNQPTNQPTNQPTNQPTNQ) are 11 X 4 AA tandem repeats of P-T-N-Q. The span at 26–70 (PTNQPTNQPTNQPTNQPTNQPTNQPTNQPTNQPTNQPTNQPTNQN) shows a compositional bias: low complexity. Positions 78 to 85 (EQINVSGS) match the TonB box motif. Residues 89–216 (TDTKAPPKIA…LGGSVSLDTK (128 aa)) enclose the TBDR plug domain. The 854-residue stretch at 224–1077 (NKNYYASYKR…NYRMSVQFEF (854 aa)) folds into the TBDR beta-barrel domain. The TonB C-terminal box motif lies at 1060-1077 (NRFYAPERNYRMSVQFEF).

This sequence belongs to the TonB-dependent receptor family. Hemoglobin/haptoglobin binding protein subfamily.

It localises to the cell outer membrane. Its function is as follows. Acts as a receptor for hemoglobin or the hemoglobin/haptoglobin complex of the human host and is required for heme uptake. The polypeptide is Hemoglobin and hemoglobin-haptoglobin-binding protein A (hgpA) (Haemophilus influenzae).